The sequence spans 345 residues: Ferrochelatase (345 aa).

Residues His215 and Glu296 each coordinate Fe cation.

Belongs to the ferrochelatase family.

The protein localises to the cytoplasm. The catalysed reaction is heme b + 2 H(+) = protoporphyrin IX + Fe(2+). The protein operates within porphyrin-containing compound metabolism; protoheme biosynthesis; protoheme from protoporphyrin-IX: step 1/1. Its function is as follows. Catalyzes the ferrous insertion into protoporphyrin IX. The polypeptide is Ferrochelatase (Rhodopseudomonas palustris (strain ATCC BAA-98 / CGA009)).